The primary structure comprises 406 residues: Arginine deiminase (406 aa).

C396 (amidino-cysteine intermediate) is an active-site residue.

The protein belongs to the arginine deiminase family.

It is found in the cytoplasm. It carries out the reaction L-arginine + H2O = L-citrulline + NH4(+). The protein operates within amino-acid degradation; L-arginine degradation via ADI pathway; carbamoyl phosphate from L-arginine: step 1/2. In Vibrio campbellii (strain ATCC BAA-1116), this protein is Arginine deiminase.